A 398-amino-acid chain; its full sequence is Sphingosine 1-phosphate receptor 5 (398 aa).

The Extracellular portion of the chain corresponds to 1–40; the sequence is MESGLLRPAPVSEVIVLHYNYTGKLRGARYQPGAGLRADA. A glycan (N-linked (GlcNAc...) asparagine) is linked at Asn-20. The chain crosses the membrane as a helical span at residues 41 to 61; sequence VVCLAVCAFIVLENLAVLLVL. Over 62–70 the chain is Cytoplasmic; that stretch reads GRHPRFHAP. Residues 71–91 form a helical membrane-spanning segment; the sequence is MFLLLGSLTLSDLLAGAAYAA. Topologically, residues 92–111 are extracellular; sequence NILLSGPLTLKLSPALWFAR. The chain crosses the membrane as a helical span at residues 112 to 132; sequence EGGVFVALTASVLSLLAIALE. Over 133–151 the chain is Cytoplasmic; the sequence is RSLTMARRGPAPVSSRGRT. Residues 152–172 traverse the membrane as a helical segment; sequence LAMAAAAWGVSLLLGLLPALG. At 173 to 192 the chain is on the extracellular side; it reads WNCLGRLDACSTVLPLYAKA. Residues 193–213 traverse the membrane as a helical segment; it reads YVLFCVLAFVGILAAICALYA. Over 214 to 252 the chain is Cytoplasmic; it reads RIYCQVRANARRLPARPGTAGTTSTRARRKPRSLALLRT. Residues 253 to 273 traverse the membrane as a helical segment; the sequence is LSVVLLAFVACWGPLFLLLLL. Over 274 to 287 the chain is Extracellular; it reads DVACPARTCPVLLQ. The helical transmembrane segment at 288-308 threads the bilayer; it reads ADPFLGLAMANSLLNPIIYTL. Over 309 to 398 the chain is Cytoplasmic; that stretch reads TNRDLRHALL…RTLVSEPAAD (90 aa). Residue Cys-323 is the site of S-palmitoyl cysteine attachment. Positions 329–398 are disordered; the sequence is GRDPSGSQQS…RTLVSEPAAD (70 aa). Residues 333-347 are compositionally biased toward low complexity; the sequence is SGSQQSASAAEASGG. Ser-381 carries the phosphoserine modification.

Belongs to the G-protein coupled receptor 1 family. Widely expressed in the brain, most prominently in the corpus callosum, which is predominantly white matter. Detected in spleen, peripheral blood leukocytes, placenta, lung, aorta and fetal spleen. Low-level signal detected in many tissue extracts. Overexpressed in leukemic large granular lymphocytes. Isoform 1 is predominantly expressed in peripheral tissues. Isoform 2 is expressed in brain, spleen and peripheral blood leukocytes.

The protein localises to the cell membrane. In terms of biological role, receptor for the lysosphingolipid sphingosine 1-phosphate (S1P). S1P is a bioactive lysophospholipid that elicits diverse physiological effect on most types of cells and tissues. Is coupled to both the G(i/0)alpha and G(12) subclass of heteromeric G-proteins. May play a regulatory role in the transformation of radial glial cells into astrocytes and may affect proliferative activity of these cells. The chain is Sphingosine 1-phosphate receptor 5 (S1PR5) from Homo sapiens (Human).